Reading from the N-terminus, the 208-residue chain is Protein-L-isoaspartate O-methyltransferase (208 aa).

Serine 59 is a catalytic residue.

This sequence belongs to the methyltransferase superfamily. L-isoaspartyl/D-aspartyl protein methyltransferase family.

It localises to the cytoplasm. The enzyme catalyses [protein]-L-isoaspartate + S-adenosyl-L-methionine = [protein]-L-isoaspartate alpha-methyl ester + S-adenosyl-L-homocysteine. In terms of biological role, catalyzes the methyl esterification of L-isoaspartyl residues in peptides and proteins that result from spontaneous decomposition of normal L-aspartyl and L-asparaginyl residues. It plays a role in the repair and/or degradation of damaged proteins. The protein is Protein-L-isoaspartate O-methyltransferase of Escherichia coli (strain K12 / MC4100 / BW2952).